The following is a 273-amino-acid chain: Putative pyruvate, phosphate dikinase regulatory protein (273 aa).

153 to 160 (GVSRTSKT) serves as a coordination point for ADP.

The protein belongs to the pyruvate, phosphate/water dikinase regulatory protein family. PDRP subfamily.

It carries out the reaction N(tele)-phospho-L-histidyl/L-threonyl-[pyruvate, phosphate dikinase] + ADP = N(tele)-phospho-L-histidyl/O-phospho-L-threonyl-[pyruvate, phosphate dikinase] + AMP + H(+). It catalyses the reaction N(tele)-phospho-L-histidyl/O-phospho-L-threonyl-[pyruvate, phosphate dikinase] + phosphate + H(+) = N(tele)-phospho-L-histidyl/L-threonyl-[pyruvate, phosphate dikinase] + diphosphate. Functionally, bifunctional serine/threonine kinase and phosphorylase involved in the regulation of the pyruvate, phosphate dikinase (PPDK) by catalyzing its phosphorylation/dephosphorylation. The chain is Putative pyruvate, phosphate dikinase regulatory protein from Sinorhizobium fredii (strain NBRC 101917 / NGR234).